The following is a 1235-amino-acid chain: Ubiquitin carboxyl-terminal hydrolase 40 (1235 aa).

One can recognise a USP domain in the interval 41–482 (SGIRNQGGTC…SAYMLFYRKA (442 aa)). The active-site Nucleophile is cysteine 50. Histidine 305 serves as the catalytic Proton acceptor.

Belongs to the peptidase C19 family.

It catalyses the reaction Thiol-dependent hydrolysis of ester, thioester, amide, peptide and isopeptide bonds formed by the C-terminal Gly of ubiquitin (a 76-residue protein attached to proteins as an intracellular targeting signal).. This Mus musculus (Mouse) protein is Ubiquitin carboxyl-terminal hydrolase 40 (Usp40).